Here is a 123-residue protein sequence, read N- to C-terminus: Ribonuclease P protein component (123 aa).

Belongs to the RnpA family. As to quaternary structure, consists of a catalytic RNA component (M1 or rnpB) and a protein subunit.

It carries out the reaction Endonucleolytic cleavage of RNA, removing 5'-extranucleotides from tRNA precursor.. RNaseP catalyzes the removal of the 5'-leader sequence from pre-tRNA to produce the mature 5'-terminus. It can also cleave other RNA substrates such as 4.5S RNA. The protein component plays an auxiliary but essential role in vivo by binding to the 5'-leader sequence and broadening the substrate specificity of the ribozyme. The sequence is that of Ribonuclease P protein component from Streptomyces griseus subsp. griseus (strain JCM 4626 / CBS 651.72 / NBRC 13350 / KCC S-0626 / ISP 5235).